The following is a 121-amino-acid chain: Outer membrane lipoprotein BBA14 (121 aa).

The first 19 residues, 1–19, serve as a signal peptide directing secretion; that stretch reads MQIKNFPFLFLLNSLIIFS. Cys-20 is lipidated: N-palmitoyl cysteine. Cys-20 carries the S-diacylglycerol cysteine lipid modification.

The protein localises to the cell outer membrane. In terms of biological role, outer membrane lipoprotein that could act as a component of a potential toxin-antitoxin system in B.burgdorferi which could serve as a plasmid stabilization mechanism in a growing bacterial population. This chain is Outer membrane lipoprotein BBA14, found in Borreliella burgdorferi (strain ATCC 35210 / DSM 4680 / CIP 102532 / B31) (Borrelia burgdorferi).